A 119-amino-acid polypeptide reads, in one-letter code: Large ribosomal subunit protein bL20 (119 aa).

Belongs to the bacterial ribosomal protein bL20 family. Part of the 50S ribosomal subunit.

Binds directly to 23S ribosomal RNA and is necessary for the in vitro assembly process of the 50S ribosomal subunit. It is not involved in the protein synthesizing functions of that subunit. This Bacillus subtilis (strain 168) protein is Large ribosomal subunit protein bL20 (rplT).